We begin with the raw amino-acid sequence, 1043 residues long: Chitin synthase 2 (1043 aa).

The segment covering 1-10 has biased composition (polar residues); it reads MAQESSNMDQ. 2 disordered regions span residues 1 to 133 and 215 to 234; these read MAQE…PRRP and ESDFNVHYGPAPTGRQERRG. The span at 11-21 shows a compositional bias: basic and acidic residues; the sequence is SKSDNVTDNKP. Over residues 43–58 the composition is skewed to low complexity; that stretch reads SASTSSLPTSRPSSSP. Composition is skewed to polar residues over residues 59-73 and 81-93; these read GQSPNITPSILTSDT and VSPTRPWTPSRGS. Transmembrane regions (helical) follow at residues 663–683, 703–723, 738–758, 780–800, 907–927, and 931–951; these read FVSLAFTFFSLANFYLTFYFI, IFAILRYTCVLLICLQFVLSM, MIIYCIIMMYTVFSALYMVVM, YIIVSTLSTVGLYFFMSFLYL, YMVSVWFIANAILAMAVSEAF, and SVGNNAYLAFVLWSVASLAVF.

The protein belongs to the chitin synthase family. Class II subfamily.

It is found in the cell membrane. It catalyses the reaction [(1-&gt;4)-N-acetyl-beta-D-glucosaminyl](n) + UDP-N-acetyl-alpha-D-glucosamine = [(1-&gt;4)-N-acetyl-beta-D-glucosaminyl](n+1) + UDP + H(+). Its function is as follows. Polymerizes chitin, a structural polymer of the cell wall and septum, by transferring the sugar moiety of UDP-GlcNAc to the non-reducing end of the growing chitin polymer. The protein is Chitin synthase 2 (CHS2) of Paracoccidioides brasiliensis.